Here is a 141-residue protein sequence, read N- to C-terminus: Ribonuclease VapC2 (141 aa).

In terms of domain architecture, PINc spans 7–129 (LIDKSALVRL…FDAIAALTGQ (123 aa)). 3 residues coordinate Mg(2+): D99, D117, and D119.

It belongs to the PINc/VapC protein family. Probably active as a homodimer. Requires Mg(2+) as cofactor.

In terms of biological role, toxic component of a type II toxin-antitoxin (TA) system. Acts as an RNase. All its toxic effects are neutralized by coexpression with cognate antitoxin VapB2. The polypeptide is Ribonuclease VapC2 (Mycobacterium tuberculosis (strain CDC 1551 / Oshkosh)).